The primary structure comprises 159 residues: Protein-export protein SecB (159 aa).

It belongs to the SecB family. Homotetramer, a dimer of dimers. One homotetramer interacts with 1 SecA dimer.

It is found in the cytoplasm. Functionally, one of the proteins required for the normal export of preproteins out of the cell cytoplasm. It is a molecular chaperone that binds to a subset of precursor proteins, maintaining them in a translocation-competent state. It also specifically binds to its receptor SecA. The chain is Protein-export protein SecB from Rhizobium etli (strain CIAT 652).